A 77-amino-acid chain; its full sequence is uncharacterized protein (77 aa).

2 helical membrane passes run 22–42 (VFAN…LPVG) and 44–64 (LIGL…FFLG).

Its subcellular location is the cell membrane. This is an uncharacterized protein from Methanocaldococcus jannaschii (strain ATCC 43067 / DSM 2661 / JAL-1 / JCM 10045 / NBRC 100440) (Methanococcus jannaschii).